The sequence spans 761 residues: Mitochondrial intermediate peptidase 1 (761 aa).

H530 contacts Zn(2+). E531 is a catalytic residue. Zn(2+) contacts are provided by H534 and H537.

This sequence belongs to the peptidase M3 family. Zn(2+) serves as cofactor.

It localises to the mitochondrion matrix. The enzyme catalyses Release of an N-terminal octapeptide as second stage of processing of some proteins imported into the mitochondrion.. Functionally, cleaves proteins, imported into the mitochondrion, to their mature size. While most mitochondrial precursor proteins are processed to the mature form in one step by mitochondrial processing peptidase (MPP), the sequential cleavage by MIP of an octapeptide after initial processing by MPP is a required step for a subgroup of nuclear-encoded precursor proteins destined for the matrix or the inner membrane. The polypeptide is Mitochondrial intermediate peptidase 1 (OCT1) (Cryptococcus neoformans var. neoformans serotype D (strain B-3501A) (Filobasidiella neoformans)).